The following is a 125-amino-acid chain: Large ribosomal subunit protein uL22c (125 aa).

It belongs to the universal ribosomal protein uL22 family. Part of the 50S ribosomal subunit.

It localises to the plastid. The protein localises to the chloroplast. Its function is as follows. This protein binds specifically to 23S rRNA. In terms of biological role, the globular domain of the protein is located near the polypeptide exit tunnel on the outside of the subunit, while an extended beta-hairpin is found that lines the wall of the exit tunnel in the center of the 70S ribosome. In Nymphaea alba (White water-lily), this protein is Large ribosomal subunit protein uL22c (rpl22).